Here is a 122-residue protein sequence, read N- to C-terminus: Large ribosomal subunit protein uL14c (122 aa).

Belongs to the universal ribosomal protein uL14 family. In terms of assembly, part of the 50S ribosomal subunit.

It localises to the plastid. It is found in the chloroplast. Binds to 23S rRNA. The polypeptide is Large ribosomal subunit protein uL14c (Tupiella akineta (Green alga)).